The chain runs to 242 residues: MSISCLSASAAKALDAELMSAGAFSIDQLMELAGLSVSQAVYREYPPSQYSQVLICCGPGNNGGDGLVAARHLWQYGYKPTVYYPKPSSPELYKRLCKQLDDLDIPVVKSHDSNHFSQLLRDSKLVVDSIFGFSFKGPVRDPFGSILAAIVESKIKVLSVDAPSSWEIDEGPQKEGPLKDFDPDTLISLTAPKPCSKFYKGKHYLGGRFVSKVITKKFNLSLPPYPGIDQVVDITNKPLSMV.

In terms of domain architecture, YjeF N-terminal spans 11 to 221; sequence AKALDAELMS…KVITKKFNLS (211 aa). Residue 61–65 participates in (6S)-NADPHX binding; that stretch reads NNGGD. Asn-62 and Asp-128 together coordinate K(+). (6S)-NADPHX is bound by residues 132–138 and Asp-161; that span reads GFSFKGP. Ser-164 lines the K(+) pocket.

This sequence belongs to the NnrE/AIBP family. Requires K(+) as cofactor.

It localises to the cytoplasm. It is found in the mitochondrion. The protein localises to the nucleus. The catalysed reaction is (6R)-NADHX = (6S)-NADHX. The enzyme catalyses (6R)-NADPHX = (6S)-NADPHX. Functionally, catalyzes the epimerization of the S- and R-forms of NAD(P)HX, a damaged form of NAD(P)H that is a result of enzymatic or heat-dependent hydration. This is a prerequisite for the S-specific NAD(P)H-hydrate dehydratase to allow the repair of both epimers of NAD(P)HX. May have a role in meiosis. This is NAD(P)H-hydrate epimerase (mug182) from Schizosaccharomyces pombe (strain 972 / ATCC 24843) (Fission yeast).